The following is an 80-amino-acid chain: RNA-binding protein Hfq (80 aa).

The Sm domain occupies 10–69 (DPFLNTLRREHVPVSIYLVNGIKLQGQIESFDQYVVLLKNTVTQMVYKHAISTVVPARPV).

It belongs to the Hfq family. As to quaternary structure, homohexamer.

Its function is as follows. RNA chaperone that binds small regulatory RNA (sRNAs) and mRNAs to facilitate mRNA translational regulation in response to envelope stress, environmental stress and changes in metabolite concentrations. Also binds with high specificity to tRNAs. The sequence is that of RNA-binding protein Hfq from Azoarcus sp. (strain BH72).